A 315-amino-acid polypeptide reads, in one-letter code: Transaldolase (315 aa).

The active-site Schiff-base intermediate with substrate is the lysine 131.

It belongs to the transaldolase family. Type 1 subfamily. Homodimer.

Its subcellular location is the cytoplasm. It catalyses the reaction D-sedoheptulose 7-phosphate + D-glyceraldehyde 3-phosphate = D-erythrose 4-phosphate + beta-D-fructose 6-phosphate. The protein operates within carbohydrate degradation; pentose phosphate pathway; D-glyceraldehyde 3-phosphate and beta-D-fructose 6-phosphate from D-ribose 5-phosphate and D-xylulose 5-phosphate (non-oxidative stage): step 2/3. Its function is as follows. Transaldolase is important for the balance of metabolites in the pentose-phosphate pathway. This chain is Transaldolase, found in Actinobacillus pleuropneumoniae serotype 3 (strain JL03).